The primary structure comprises 675 residues: Heat shock 70 kDa protein 12A (675 aa).

Basic and acidic residues predominate over residues 1–13; it reads MADKEAGGSDGPR. A disordered region spans residues 1-45; it reads MADKEAGGSDGPRETAPTSAYSSPARSLGDTGITPLSPSHIVNDT. A2 is subject to N-acetylalanine. 2 stretches are compositionally biased toward polar residues: residues 16 to 25 and 34 to 45; these read APTSAYSSPA and TPLSPSHIVNDT.

The protein belongs to the heat shock protein 70 family. Interacts with SORL1 (via cytosolic C-terminus); this interaction affects SORL1 internalization and subcellular localization. In terms of tissue distribution, widely expressed with highest levels in brain, kidney and muscle.

The protein localises to the cytoplasm. The protein resides in the nucleus. In terms of biological role, adapter protein for SORL1, but not SORT1. Delays SORL1 internalization and affects SORL1 subcellular localization. This chain is Heat shock 70 kDa protein 12A (HSPA12A), found in Homo sapiens (Human).